Reading from the N-terminus, the 235-residue chain is Dephospho-CoA kinase (235 aa).

One can recognise a DPCK domain in the interval 15–219 (NVGLTGSISC…KKERLQRKSA (205 aa)). 23-28 (SCGKST) lines the ATP pocket.

This sequence belongs to the CoaE family.

The protein resides in the cytoplasm. It catalyses the reaction 3'-dephospho-CoA + ATP = ADP + CoA + H(+). The protein operates within cofactor biosynthesis; coenzyme A biosynthesis; CoA from (R)-pantothenate: step 5/5. Functionally, catalyzes the phosphorylation of the 3'-hydroxyl group of dephosphocoenzyme A to form coenzyme A. The sequence is that of Dephospho-CoA kinase from Syntrophus aciditrophicus (strain SB).